A 145-amino-acid polypeptide reads, in one-letter code: Neuromedin-S (145 aa).

Positions 1–25 are cleaved as a signal peptide; that stretch reads MKYLAQFPSILAIYCFCLLQIPSSG. Propeptides lie at residues 26-64, 65-100, and 101-103; these read FPRP…IYKR, FLFH…ADRR, and MKT. Asn-136 is subject to Asparagine amide. A propeptide spanning residues 139-145 is cleaved from the precursor; it reads NLDFDTW.

This sequence belongs to the NmU family.

The protein resides in the secreted. Implicated in the regulation of circadian rhythms through autocrine and/or paracrine actions. The protein is Neuromedin-S (NMS) of Bos taurus (Bovine).